The sequence spans 602 residues: Elongation factor 4 (602 aa).

The region spanning 7–190 (KHIRNFCIVA…AVVQKVPAPS (184 aa)) is the tr-type G domain. Residues 19–24 (DHGKST) and 137–140 (NKID) each bind GTP.

This sequence belongs to the TRAFAC class translation factor GTPase superfamily. Classic translation factor GTPase family. LepA subfamily.

It localises to the cell membrane. It catalyses the reaction GTP + H2O = GDP + phosphate + H(+). Required for accurate and efficient protein synthesis under certain stress conditions. May act as a fidelity factor of the translation reaction, by catalyzing a one-codon backward translocation of tRNAs on improperly translocated ribosomes. Back-translocation proceeds from a post-translocation (POST) complex to a pre-translocation (PRE) complex, thus giving elongation factor G a second chance to translocate the tRNAs correctly. Binds to ribosomes in a GTP-dependent manner. This chain is Elongation factor 4, found in Clostridium acetobutylicum (strain ATCC 824 / DSM 792 / JCM 1419 / IAM 19013 / LMG 5710 / NBRC 13948 / NRRL B-527 / VKM B-1787 / 2291 / W).